The primary structure comprises 586 residues: Beta-fructofuranosidase, insoluble isoenzyme 3 (586 aa).

The N-terminal stretch at 1-26 is a signal peptide; it reads MATARARAALVFVALLQMAAVVVVRA. The active site involves D61. N154, N179, N341, N390, and N479 each carry an N-linked (GlcNAc...) asparagine glycan.

It belongs to the glycosyl hydrolase 32 family.

The protein resides in the secreted. It localises to the extracellular space. Its subcellular location is the apoplast. It is found in the cell wall. It carries out the reaction Hydrolysis of terminal non-reducing beta-D-fructofuranoside residues in beta-D-fructofuranosides.. This is Beta-fructofuranosidase, insoluble isoenzyme 3 (CIN3) from Oryza sativa subsp. indica (Rice).